Here is a 672-residue protein sequence, read N- to C-terminus: APC membrane recruitment protein 2 (672 aa).

The segment covering 1 to 21 (METGRSRGGGAAVSERGGGAR) has biased composition (gly residues). Disordered stretches follow at residues 1 to 23 (METG…ARAG), 74 to 360 (TMPS…DPSA), and 443 to 560 (MLSQ…DALC). The segment covering 142–158 (GSLASSSVAKSHSFFSL) has biased composition (low complexity). A Phosphoserine modification is found at Ser-154. Composition is skewed to basic and acidic residues over residues 163–175 (GRSE…HAEA) and 201–210 (RGKEEEEKAV). Residues Ser-223, Ser-227, and Ser-244 each carry the phosphoserine modification. Positions 230 to 254 (CVKEEPPRAARRPDSPGQDASRHAA) are enriched in basic and acidic residues. The segment covering 255-269 (GEPAGGEQAPASAES) has biased composition (low complexity). Phosphoserine is present on Ser-284. Residues 289 to 303 (SRGEDAEGHRREEKP) show a composition bias toward basic and acidic residues. A compositionally biased stretch (low complexity) spans 343–354 (ASAVPDPSSVDP). 2 positions are modified to phosphoserine: Ser-356 and Ser-359. Residues 446 to 457 (QTEDQGQGTQEG) are compositionally biased toward low complexity. 2 stretches are compositionally biased toward basic and acidic residues: residues 478–488 (RCGEAAKDMSS) and 502–516 (QQKE…EHQE).

It belongs to the Amer family. Interacts with APC.

The protein resides in the cell membrane. Functionally, negative regulator of the canonical Wnt signaling pathway involved in neuroectodermal patterning. Acts by specifically binding phosphatidylinositol 4,5-bisphosphate (PtdIns(4,5)P2), translocating to the cell membrane and interacting with key regulators of the canonical Wnt signaling pathway, such as components of the beta-catenin destruction complex. The protein is APC membrane recruitment protein 2 (Amer2) of Mus musculus (Mouse).